Reading from the N-terminus, the 71-residue chain is Alpha-elapitoxin-Nn3a (71 aa).

Intrachain disulfides connect C3–C20, C14–C42, C26–C30, C46–C56, and C57–C62.

This sequence belongs to the three-finger toxin family. Long-chain subfamily. Type II alpha-neurotoxin sub-subfamily. In terms of tissue distribution, expressed by the venom gland.

Its subcellular location is the secreted. In terms of biological role, nicotinic acetylcholine receptor antagonist. Binds to muscle nicotinic acetylcholine receptor (nAChR) and inhibits acetylcholine from binding to the receptor, thereby impairing neuromuscular transmission. Produces peripheral paralysis by blocking neuromuscular transmission at the postsynaptic site. Induces concentration-dependent inhibition of indirect twitches and abolishes contractile responses of tissues to exogenous acetylcholine and carbachol, in the chick biventer cervicis nerve-muscle preparation at 100-300 nM (in vitro). Prior incubation of tissues with Indian polyvalent antivenom (1 ml/0.6 mg) prevents the neurotoxic effects at 100 nM (in vitro). Addition of Indian polyvalent antivenom (1 ml/0.6 mg) at the t90 time point partially restores the neurotoxic effects (in vitro). Displays a reversible antagonism of concentration-response curves to carbachol, with a pA2 of 8.17 (in vitro). This is Alpha-elapitoxin-Nn3a from Naja naja (Indian cobra).